Consider the following 368-residue polypeptide: MGTPPGLQTDCEALLSRFQETDSVRFEDFTELWRNMKFGTIFCGRMRNLEKNMFTKEALALAWRYFLPPYTFQIRVGALYLLYGLYNTQLCQPKQKIRVALKDWDEVLKFQQDLVNAQHFDAAYIFRKLRLDRAFHFTAMPKLLSYRMKKKIHRAEVTEEFKDPSDRVMKLITSDVLEEMLNVHDHYQNMKHVISVDKSKPDKALSLIKDDFFDNIKNIVLEHQQWHKDRKNPSLKSKTNDGEEKMEGNSQETERCERAESLAKIKSKAFSVVIQASKSRRHRQVKLDSSDSDSASGQGQVKATRKKEKKERLKPAGRKMSLRNKGNVQNIHKEDKPLSLSMPVITEEEENESLSGTEFTASKKRRKH.

The tract at residues 1–168 is SNAPC3-binding; it reads MGTPPGLQTD…EEFKDPSDRV (168 aa). The SNAPC4-binding stretch occupies residues 164 to 268; it reads PSDRVMKLIT…AESLAKIKSK (105 aa). Disordered regions lie at residues 224–257 and 275–368; these read QQWH…ERCE and QASK…RRKH. A compositionally biased stretch (basic and acidic residues) spans 238–257; that stretch reads KTNDGEEKMEGNSQETERCE. Residues S289 and S290 each carry the phosphoserine modification.

Part of the SNAPc complex composed of 5 subunits: SNAPC1, SNAPC2, SNAPC3, SNAPC4 and SNAPC5. SNAPC1 interacts with SNAPC3, SNAPC4 and TBP.

Its subcellular location is the nucleus. Part of the SNAPc complex required for the transcription of both RNA polymerase II and III small-nuclear RNA genes. Binds to the proximal sequence element (PSE), a non-TATA-box basal promoter element common to these 2 types of genes. Recruits TBP and BRF2 to the U6 snRNA TATA box. The sequence is that of snRNA-activating protein complex subunit 1 (SNAPC1) from Homo sapiens (Human).